The sequence spans 72 residues: Putative sodium channel toxin Ts18 (72 aa).

The first 21 residues, 1-21 (MNFRFPFLLMITISLIGAVLT), serve as a signal peptide directing secretion. Intrachain disulfides connect Cys-38–Cys-61, Cys-47–Cys-66, and Cys-51–Cys-68.

This sequence belongs to the long (3 C-C) scorpion toxin superfamily. In terms of tissue distribution, expressed by the venom gland.

The protein localises to the secreted. Functionally, binds to sodium channels (Nav) and affects the channel activation process. In Tityus serrulatus (Brazilian scorpion), this protein is Putative sodium channel toxin Ts18.